The primary structure comprises 104 residues: Small ribosomal subunit protein uS10 (104 aa).

It belongs to the universal ribosomal protein uS10 family. Part of the 30S ribosomal subunit.

Its function is as follows. Involved in the binding of tRNA to the ribosomes. This chain is Small ribosomal subunit protein uS10, found in Aquifex aeolicus (strain VF5).